The sequence spans 378 residues: MPTSEPNDFFHGSVGIVQTQVATFDSLTLEGGETITPLEIAYETYGTLNQKKDNAILVCHALSGDAHAAGFHEGDKRPGWWDYYIGPGKAFDTNRYFIISSNVIGGCKGSSGPLSTNGNTGKPFQSTFPFVSIGDMVNAQEKLIRHFGIHKLFAVAGGSMGGMQALQWSVAYPDRLKNCIVMASSSEHSAQQIAFNEVGRQAILSDPNWNQGLYTQEKRPSKGLALARMMGHITYLSDEMMREKFGRKPPKGNIQSTDFAVGSYLIYQGESFVDRFDANSYIYVTKALDHFSLGTGKELTKVLSKVRCRFLVIAYTSDWLYPPYQSEEIVKSLEVNAVPVSFIELNNPAGHDSFLLPSEEQDSILRDFLSATDEGGFF.

The AB hydrolase-1 domain occupies Asn-54–Leu-355. The Nucleophile role is filled by Ser-159. Arg-228 is a binding site for substrate. Active-site residues include Asp-318 and His-351. Asp-352 provides a ligand contact to substrate.

Belongs to the AB hydrolase superfamily. MetX family. In terms of assembly, homodimer.

It is found in the cytoplasm. It catalyses the reaction L-homoserine + acetyl-CoA = O-acetyl-L-homoserine + CoA. It participates in amino-acid biosynthesis; L-methionine biosynthesis via de novo pathway; O-acetyl-L-homoserine from L-homoserine: step 1/1. Transfers an acetyl group from acetyl-CoA to L-homoserine, forming acetyl-L-homoserine. This chain is Homoserine O-acetyltransferase, found in Leptospira biflexa serovar Patoc (strain Patoc 1 / Ames).